Consider the following 259-residue polypeptide: 14-3-3-like protein GF14 omega (259 aa).

Residues Ser67, Ser109, and Ser190 each carry the phosphoserine modification. A Phosphothreonine modification is found at Thr211.

This sequence belongs to the 14-3-3 family. Interacts with CINV1.

It is found in the nucleus. Its subcellular location is the cytoplasm. Its function is as follows. Is associated with a DNA binding complex that binds to the G box, a well-characterized cis-acting DNA regulatory element found in plant genes. The chain is 14-3-3-like protein GF14 omega (GRF2) from Arabidopsis thaliana (Mouse-ear cress).